The primary structure comprises 367 residues: Heme A synthase (367 aa).

Transmembrane regions (helical) follow at residues 25 to 45 (AIRI…LVGG), 111 to 131 (FLAR…VLTG), 137 to 157 (LWLP…IGWW), 174 to 194 (LATH…FMRA), and 211 to 231 (LAGL…LVAG). H274 contacts heme. 3 helical membrane-spanning segments follow: residues 276–296 (LGAY…LRAA), 305–325 (SVVL…TLLL), and 327–347 (VPLH…GFAI). H335 lines the heme pocket.

Belongs to the COX15/CtaA family. Type 2 subfamily. In terms of assembly, interacts with CtaB. The cofactor is heme b.

Its subcellular location is the cell membrane. It carries out the reaction Fe(II)-heme o + 2 A + H2O = Fe(II)-heme a + 2 AH2. Its pathway is porphyrin-containing compound metabolism; heme A biosynthesis; heme A from heme O: step 1/1. In terms of biological role, catalyzes the conversion of heme O to heme A by two successive hydroxylations of the methyl group at C8. The first hydroxylation forms heme I, the second hydroxylation results in an unstable dihydroxymethyl group, which spontaneously dehydrates, resulting in the formyl group of heme A. The sequence is that of Heme A synthase from Rhizobium rhizogenes (strain K84 / ATCC BAA-868) (Agrobacterium radiobacter).